A 430-amino-acid chain; its full sequence is Adenylosuccinate synthetase (430 aa).

GTP is bound by residues 13–19 and 41–43; these read GDEGKGK and GHT. Aspartate 14 (proton acceptor) is an active-site residue. Positions 14 and 41 each coordinate Mg(2+). IMP contacts are provided by residues 14–17, 39–42, threonine 130, arginine 144, glutamine 225, threonine 240, and arginine 304; these read DEGK and NAGH. Histidine 42 functions as the Proton donor in the catalytic mechanism. 300–306 is a binding site for substrate; it reads STTGRAR. GTP is bound by residues arginine 306, 332–334, and 414–416; these read KLD and STG.

It belongs to the adenylosuccinate synthetase family. As to quaternary structure, homodimer. Mg(2+) serves as cofactor.

It is found in the cytoplasm. The catalysed reaction is IMP + L-aspartate + GTP = N(6)-(1,2-dicarboxyethyl)-AMP + GDP + phosphate + 2 H(+). It participates in purine metabolism; AMP biosynthesis via de novo pathway; AMP from IMP: step 1/2. Plays an important role in the de novo pathway of purine nucleotide biosynthesis. Catalyzes the first committed step in the biosynthesis of AMP from IMP. The chain is Adenylosuccinate synthetase from Pseudomonas putida (strain ATCC 700007 / DSM 6899 / JCM 31910 / BCRC 17059 / LMG 24140 / F1).